A 294-amino-acid polypeptide reads, in one-letter code: MSRLFEGVGVALTTPFTNNEIDYEALEKHVDYLLNNNIQSIVVNGTTAENPTLSDEEKDEVLKAVVKQVDGRVPVIAGTGTNATKKSLEASLRAKEIGADAIMLITPYYNKTSQRGLVAHFTTIADAVGLPVVLYNVPSRTNMTIDVDTMVELAKNPFIVAIKDATNDFDYHNKLKERLDLSDFSLYSGNDDNVVRYFAEGGNGVISVVANAIPGDFQALYEKSKRGEAIDKDFEPISRLLNALSVDVNPIPIKALTAVEGFGNYEVRLPLVTLESSDRKQLEEAYAKYKAGEL.

Residue Thr-47 coordinates pyruvate. The active-site Proton donor/acceptor is the Tyr-135. Lys-163 acts as the Schiff-base intermediate with substrate in catalysis. Ile-206 lines the pyruvate pocket.

Belongs to the DapA family. As to quaternary structure, homodimer.

It localises to the cytoplasm. The enzyme catalyses L-aspartate 4-semialdehyde + pyruvate = (2S,4S)-4-hydroxy-2,3,4,5-tetrahydrodipicolinate + H2O + H(+). It functions in the pathway amino-acid biosynthesis; L-lysine biosynthesis via DAP pathway; (S)-tetrahydrodipicolinate from L-aspartate: step 3/4. Functionally, catalyzes the condensation of (S)-aspartate-beta-semialdehyde [(S)-ASA] and pyruvate to 4-hydroxy-tetrahydrodipicolinate (HTPA). In Staphylococcus carnosus (strain TM300), this protein is 4-hydroxy-tetrahydrodipicolinate synthase.